Reading from the N-terminus, the 192-residue chain is Hydrophobin-like protein rodD (192 aa).

3 disulfide bridges follow: Cys45/Cys106, Cys50/Cys99, and Cys107/Cys112.

This sequence belongs to the fungal hydrophobin family. In terms of assembly, self-assembles to form functional amyloid fibrils called rodlets. Self-assembly into fibrillar rodlets occurs spontaneously at hydrophobic:hydrophilic interfaces and the rodlets further associate laterally to form amphipathic monolayers.

Functionally, aerial growth, conidiation, and dispersal of filamentous fungi in the environment rely upon a capability of their secreting small amphipathic proteins called hydrophobins (HPBs) with low sequence identity. Class I can self-assemble into an outermost layer of rodlet bundles on aerial cell surfaces, conferring cellular hydrophobicity that supports fungal growth, development and dispersal; whereas Class II form highly ordered films at water-air interfaces through intermolecular interactions but contribute nothing to the rodlet structure. RodD is a an hydrophobin-like protein that, unlike rodA, is not required for rodlet formation. The protein is Hydrophobin-like protein rodD of Aspergillus fumigatus (strain ATCC MYA-4609 / CBS 101355 / FGSC A1100 / Af293) (Neosartorya fumigata).